The chain runs to 369 residues: Glutamine synthetase (369 aa).

In terms of domain architecture, GS beta-grasp spans 23–102 (VIAEYIWVDS…VLAECWNNDG (80 aa)). In terms of domain architecture, GS catalytic spans 109-369 (HRHEAAKLFE…MSKEFERESS (261 aa)).

This sequence belongs to the glutamine synthetase family. Homooctamer.

The protein localises to the cytoplasm. The enzyme catalyses L-glutamate + NH4(+) + ATP = L-glutamine + ADP + phosphate + H(+). The protein is Glutamine synthetase (GLN1) of Eremothecium gossypii (strain ATCC 10895 / CBS 109.51 / FGSC 9923 / NRRL Y-1056) (Yeast).